We begin with the raw amino-acid sequence, 76 residues long: Small ribosomal subunit protein bS18 (76 aa).

This sequence belongs to the bacterial ribosomal protein bS18 family. In terms of assembly, part of the 30S ribosomal subunit. Forms a tight heterodimer with protein bS6.

In terms of biological role, binds as a heterodimer with protein bS6 to the central domain of the 16S rRNA, where it helps stabilize the platform of the 30S subunit. The polypeptide is Small ribosomal subunit protein bS18 (Mesoplasma florum (strain ATCC 33453 / NBRC 100688 / NCTC 11704 / L1) (Acholeplasma florum)).